Consider the following 327-residue polypeptide: Tetraacyldisaccharide 4'-kinase (327 aa).

52-59 (TLGGAGKT) is a binding site for ATP.

It belongs to the LpxK family.

It carries out the reaction a lipid A disaccharide + ATP = a lipid IVA + ADP + H(+). It functions in the pathway glycolipid biosynthesis; lipid IV(A) biosynthesis; lipid IV(A) from (3R)-3-hydroxytetradecanoyl-[acyl-carrier-protein] and UDP-N-acetyl-alpha-D-glucosamine: step 6/6. Transfers the gamma-phosphate of ATP to the 4'-position of a tetraacyldisaccharide 1-phosphate intermediate (termed DS-1-P) to form tetraacyldisaccharide 1,4'-bis-phosphate (lipid IVA). The protein is Tetraacyldisaccharide 4'-kinase of Methylorubrum extorquens (strain PA1) (Methylobacterium extorquens).